We begin with the raw amino-acid sequence, 365 residues long: 3-dehydroquinate synthase (365 aa).

NAD(+) is bound by residues 69–74 (DGEAHK), 103–107 (GVIGD), 127–128 (TT), Lys-140, Lys-149, and 167–170 (TLNT). Zn(2+) contacts are provided by Glu-182, His-245, and His-262.

The protein belongs to the sugar phosphate cyclases superfamily. Dehydroquinate synthase family. It depends on Co(2+) as a cofactor. Zn(2+) serves as cofactor. The cofactor is NAD(+).

It is found in the cytoplasm. The catalysed reaction is 7-phospho-2-dehydro-3-deoxy-D-arabino-heptonate = 3-dehydroquinate + phosphate. The protein operates within metabolic intermediate biosynthesis; chorismate biosynthesis; chorismate from D-erythrose 4-phosphate and phosphoenolpyruvate: step 2/7. Catalyzes the conversion of 3-deoxy-D-arabino-heptulosonate 7-phosphate (DAHP) to dehydroquinate (DHQ). This Pseudomonas putida (strain W619) protein is 3-dehydroquinate synthase.